The sequence spans 292 residues: GTP cyclohydrolase FolE2 (292 aa).

Belongs to the GTP cyclohydrolase IV family.

The enzyme catalyses GTP + H2O = 7,8-dihydroneopterin 3'-triphosphate + formate + H(+). Its pathway is cofactor biosynthesis; 7,8-dihydroneopterin triphosphate biosynthesis; 7,8-dihydroneopterin triphosphate from GTP: step 1/1. Functionally, converts GTP to 7,8-dihydroneopterin triphosphate. The chain is GTP cyclohydrolase FolE2 from Staphylococcus epidermidis (strain ATCC 12228 / FDA PCI 1200).